Consider the following 476-residue polypeptide: POC1 centriolar protein homolog B (476 aa).

7 WD repeats span residues 16–55, 58–97, 100–139, 142–181, 183–223, 226–265, and 268–307; these read GHKA…RAYR, GHKD…KSSE, AHTA…FLYS, RHTH…CVNN, SDSV…LLQH, VHSC…LIYT, and GHTG…LHCK. Positions 429–468 form a coiled coil; it reads ALEHIMEQLNILTQTVSILEQRLSLTEDKLRDCLENQQKL.

The protein belongs to the WD repeat POC1 family. As to quaternary structure, interacts with POC1A. Interacts with FAM161A. Interacts with CEP44; the interaction is direct and recruits POC1B to centriolar microtubules. Forms a microtubule-associated complex with POC5, CETN2 and FAM161A. Interacts with CCDC15. Phosphorylated in mitotic cells that may be mediated by CDK1. In terms of tissue distribution, expressed in the retina.

The protein resides in the cytoplasm. It localises to the cytoskeleton. Its subcellular location is the microtubule organizing center. The protein localises to the centrosome. It is found in the centriole. The protein resides in the cilium basal body. It localises to the spindle pole. Plays an important role in centriole assembly and/or stability and ciliogenesis. Involved in early steps of centriole duplication, as well as in the later steps of centriole length control. Acts in concert with POC1A to ensure centriole integrity and proper mitotic spindle formation. Required for primary cilia formation, ciliary length and also cell proliferation. Required for retinal integrity. Acts as a positive regulator of centriole elongation. This Mus musculus (Mouse) protein is POC1 centriolar protein homolog B (Poc1b).